Reading from the N-terminus, the 97-residue chain is Large ribosomal subunit protein eL21 (97 aa).

This sequence belongs to the eukaryotic ribosomal protein eL21 family.

This Methanococcus vannielii (strain ATCC 35089 / DSM 1224 / JCM 13029 / OCM 148 / SB) protein is Large ribosomal subunit protein eL21.